The sequence spans 219 residues: Protein ERP1 (219 aa).

The first 22 residues, 1–22 (MLLTSLLQVFACCLVLPAQVTA), serve as a signal peptide directing secretion. Topologically, residues 23–186 (FYYYTSGAER…RDASEAVNSR (164 aa)) are lumenal. Residues 32–131 (RKCFHKELSK…KTKIDVEFQV (100 aa)) form the GOLD domain. The chain crosses the membrane as a helical span at residues 187 to 207 (AMWWIVIQLIVLAVTCGWQMK). At 208–219 (HLGKFFVKQKIL) the chain is on the cytoplasmic side.

Belongs to the EMP24/GP25L family. As to quaternary structure, associates with EMP24, ERV25 and ERP2.

The protein localises to the endoplasmic reticulum membrane. Functionally, involved in vesicular protein trafficking. The chain is Protein ERP1 (ERP1) from Saccharomyces cerevisiae (strain ATCC 204508 / S288c) (Baker's yeast).